A 376-amino-acid polypeptide reads, in one-letter code: Multicilin (376 aa).

Residues 165-213 are a coiled coil; sequence EQYWRDVADHNQKALGDALVENNQLQVSLTEKQEEIASLKEKNIQLNEL. Residues 230–261 are disordered; sequence ERPKHSSGATQGRLPVKRSLEDFYPQSNEPDS. The segment at 331 to 376 is TIRT domain; the sequence is TELEEDVSFRTSIKEHSTIRTLAFPQGNAFTIRTAAGGYKFRWVPN.

The protein belongs to the geminin family. In terms of assembly, component of the EDM complex, at least composed of e2f4, e2f5, mcidas and tfdp1.

It is found in the nucleus. Its function is as follows. Transcription regulator specifically required for multiciliate cell differentiation. Acts in a multiprotein complex containing e2f4 and e2f5 that binds and activate genes required for centriole biogenesis. Activates genes required for centriole assembly (plk4, cep152) and genes specifically required for motile cilia formation (foxj1). Also promotes the deuterosome pathway of centriole biogenesis by activating expression of deup1, but not its paralog cep63. The sequence is that of Multicilin (mcidas) from Xenopus tropicalis (Western clawed frog).